We begin with the raw amino-acid sequence, 653 residues long: J protein JJJ2 (653 aa).

Positions 14–78 constitute a J domain; sequence TLYSVLNLKY…KEKMKYDSKL (65 aa). Disordered stretches follow at residues 85–308 and 490–512; these read DYSP…SSTE and VSPK…EENL. Polar residues-rich tracts occupy residues 161 to 171 and 187 to 200; these read NAKSYQNSKKS and ATSF…SSSV. Residues 213–241 show a composition bias toward low complexity; sequence SGSAVGSESRISSSGSESSSNVNSATGSS. The span at 298-308 shows a compositional bias: polar residues; that stretch reads PVKTTPNSSTE.

Its subcellular location is the cytoplasm. It localises to the nucleus. The polypeptide is J protein JJJ2 (JJJ2) (Kluyveromyces lactis (strain ATCC 8585 / CBS 2359 / DSM 70799 / NBRC 1267 / NRRL Y-1140 / WM37) (Yeast)).